A 212-amino-acid polypeptide reads, in one-letter code: Thymidylate kinase (212 aa).

Residue 11-18 (GPDGAGKT) coordinates ATP.

This sequence belongs to the thymidylate kinase family.

It catalyses the reaction dTMP + ATP = dTDP + ADP. Its function is as follows. Phosphorylation of dTMP to form dTDP in both de novo and salvage pathways of dTTP synthesis. This is Thymidylate kinase from Streptococcus mutans serotype c (strain ATCC 700610 / UA159).